The following is a 364-amino-acid chain: Mannose-1-phosphate guanyltransferase (364 aa).

It belongs to the transferase hexapeptide repeat family.

Its subcellular location is the cytoplasm. The catalysed reaction is alpha-D-mannose 1-phosphate + GTP + H(+) = GDP-alpha-D-mannose + diphosphate. The protein operates within nucleotide-sugar biosynthesis; GDP-alpha-D-mannose biosynthesis; GDP-alpha-D-mannose from alpha-D-mannose 1-phosphate (GTP route): step 1/1. Functionally, involved in cell wall synthesis where it is required for glycosylation. Involved in cell cycle progression through cell-size checkpoint. The protein is Mannose-1-phosphate guanyltransferase (MPG1) of Pichia angusta (Yeast).